The sequence spans 332 residues: Palmitoyltransferase PFA3 (332 aa).

At 1–13 (MNLVNNFSKLFPR) the chain is on the cytoplasmic side. The helical transmembrane segment at 14–34 (CLTTGLYLWSLYAIVVCIHVI) threads the bilayer. Over 35-37 (RAR) the chain is Lumenal. The helical transmembrane segment at 38–58 (VVLPLVFTIAMVALYTYAKLI) threads the bilayer. Over 59–147 (YVGPGTTKEY…AGCVGYRNQK (89 aa)) the chain is Cytoplasmic. The 51-residue stretch at 104 to 154 (RVCKSCSSWKPDRCHHCSTCNVCVLKMDHHCPWFAGCVGYRNQKFFIQFLI) folds into the DHHC domain. The helical transmembrane segment at 148–168 (FFIQFLIYCTVYSILVLILSS) threads the bilayer. Over 169-188 (MEIYTWFKGEFFEVELINFT) the chain is Lumenal. The chain crosses the membrane as a helical span at residues 189-209 (LLSLWLLALVVSISITIFTVF). Residues 210 to 332 (SISQVCQNQT…SLDVDRSNFV (123 aa)) are Cytoplasmic-facing.

The protein belongs to the DHHC palmitoyltransferase family. PFA3 subfamily. Post-translationally, autopalmitoylated.

Its subcellular location is the vacuole membrane. The enzyme catalyses L-cysteinyl-[protein] + hexadecanoyl-CoA = S-hexadecanoyl-L-cysteinyl-[protein] + CoA. Its function is as follows. Palmitoyltransferase specific for VAC8. Palmitoylates VAC8 at one or more of its N-terminal cysteine residues, which is required for its proper membrane localization. The polypeptide is Palmitoyltransferase PFA3 (PFA3) (Candida glabrata (strain ATCC 2001 / BCRC 20586 / JCM 3761 / NBRC 0622 / NRRL Y-65 / CBS 138) (Yeast)).